The following is a 349-amino-acid chain: UPF0324 inner membrane protein YeiH (349 aa).

At 1-12 (MTNITLQKQHRT) the chain is on the periplasmic side. A helical transmembrane segment spans residues 13–32 (LWHFIPGLALSAVITGVALW). Over 33–35 (GGS) the chain is Cytoplasmic. Residues 36–58 (IPAVAGAGFSALTLAILLGMVLG) form a helical membrane-spanning segment. Topologically, residues 59–99 (NTIYPHIWKSCDGGVLFAKQYLLRLGIILYGFRLTFSQIAD) are periplasmic. Residues 100 to 122 (VGISGIIIDVLTLSSTFLLACFL) traverse the membrane as a helical segment. Topologically, residues 123-131 (GQKVFGLDK) are cytoplasmic. Residues 132–151 (HTSWLIGAGSSICGAAAVLA) traverse the membrane as a helical segment. Residues 152–162 (TEPVVKAEASK) lie on the Periplasmic side of the membrane. A helical membrane pass occupies residues 163–185 (VTVAVATVVIFGTVAIFLYPAIY). The Cytoplasmic segment spans residues 186 to 261 (PLMSQWFSPE…SGANSGEKSK (76 aa)). Residues 262–283 (ITIPWFAILFIVVAIFNSFHLL) form a helical membrane-spanning segment. Over 284-289 (PQSVVN) the chain is Periplasmic. The helical transmembrane segment at 290 to 312 (MLVTLDTFLLAMAMAALGLTTHV) threads the bilayer. The Cytoplasmic segment spans residues 313–321 (SALKKAGAK). Residues 322-344 (PLLMALVLFAWLIVGGGAINYVI) traverse the membrane as a helical segment. Over 345 to 349 (QSVIA) the chain is Periplasmic.

The protein belongs to the UPF0324 family.

Its subcellular location is the cell inner membrane. This chain is UPF0324 inner membrane protein YeiH (yeiH), found in Escherichia coli O157:H7.